The chain runs to 98 residues: GYLGGYAAPALAYGAAPAVAYAAPAAYAPAALTSQSSNILRSYGNLGQVSTYTKTVDTPYSSVTKSDVRVSNDAIAHVAAPALAYAAPAAYAAPAYYH.

Repeat copies occupy residues 7–10 (AAPA), 15–18 (AAPA), 22–25 (AAPA), 79–82 (AAPA), 86–89 (AAPA), and 92–95 (AAPA).

In terms of biological role, component of the cuticle of migratory locust which contains more than 100 different structural proteins. This is Cuticle protein 67, isoform A from Locusta migratoria (Migratory locust).